A 312-amino-acid polypeptide reads, in one-letter code: DNA-directed RNA polymerase subunit alpha (312 aa).

An alpha N-terminal domain (alpha-NTD) region spans residues 1 to 229; sequence MLQYQIDRID…ELFQPLATVT (229 aa). Positions 241–312 are alpha C-terminal domain (alpha-CTD); it reads SPEAQIPLEE…ISIPQSRTSV (72 aa).

Belongs to the RNA polymerase alpha chain family. In cyanobacteria the RNAP catalytic core is composed of 2 alpha, 1 beta, 1 beta', 1 gamma and 1 omega subunit. When a sigma factor is associated with the core the holoenzyme is formed, which can initiate transcription.

It carries out the reaction RNA(n) + a ribonucleoside 5'-triphosphate = RNA(n+1) + diphosphate. Functionally, DNA-dependent RNA polymerase catalyzes the transcription of DNA into RNA using the four ribonucleoside triphosphates as substrates. This Prochlorococcus marinus (strain MIT 9215) protein is DNA-directed RNA polymerase subunit alpha.